The following is a 96-amino-acid chain: Nucleoid-associated protein TC_0612 (96 aa).

It belongs to the YbaB/EbfC family. As to quaternary structure, homodimer.

The protein localises to the cytoplasm. It localises to the nucleoid. Functionally, binds to DNA and alters its conformation. May be involved in regulation of gene expression, nucleoid organization and DNA protection. The chain is Nucleoid-associated protein TC_0612 from Chlamydia muridarum (strain MoPn / Nigg).